The chain runs to 257 residues: Molybdate-binding protein ModA (257 aa).

The first 24 residues, 1-24 (MARKWLNLFAGAALSFAVAGNALA), serve as a signal peptide directing secretion. Molybdate is bound by residues Ser36, Ser63, Ala149, Val176, and Tyr194.

The protein belongs to the bacterial solute-binding protein ModA family. In terms of assembly, the complex is composed of two ATP-binding proteins (ModC), two transmembrane proteins (ModB) and a solute-binding protein (ModA).

It is found in the periplasm. Part of the ABC transporter complex ModABC involved in the transport of molybdenum into the cell. Binds molybdate with high affinity in vitro and with a similar affinity in vivo. Binds tungstate with high affinity in vitro. Binds unnatural anion perrhenate with high affinity in vitro. Does not bind sulfate, phosphate, arsenate, selenate, chlorate, metavanadate, nitrate, perchlorate, permanganate or carbonate. In Escherichia coli (strain K12), this protein is Molybdate-binding protein ModA (modA).